Consider the following 90-residue polypeptide: Putative Fis-like DNA-binding protein (90 aa).

Residues 66 to 85 (QSRAAALLGIHRATLRKKLK) constitute a DNA-binding region (H-T-H motif).

The protein belongs to the transcriptional regulatory Fis family.

This chain is Putative Fis-like DNA-binding protein, found in Xylella fastidiosa (strain Temecula1 / ATCC 700964).